The primary structure comprises 145 residues: FAD synthase (145 aa).

Residues 5-6, 10-13, Asp-92, and Tyr-119 each bind ATP; these read TF and HPGH.

The protein belongs to the archaeal FAD synthase family. In terms of assembly, homodimer. It depends on a divalent metal cation as a cofactor.

It carries out the reaction FMN + ATP + H(+) = FAD + diphosphate. It functions in the pathway cofactor biosynthesis; FAD biosynthesis; FAD from FMN: step 1/1. Catalyzes the transfer of the AMP portion of ATP to flavin mononucleotide (FMN) to produce flavin adenine dinucleotide (FAD) coenzyme. This is FAD synthase from Methanothermus fervidus (strain ATCC 43054 / DSM 2088 / JCM 10308 / V24 S).